A 59-amino-acid chain; its full sequence is Large ribosomal subunit protein uL30 (59 aa).

This sequence belongs to the universal ribosomal protein uL30 family. As to quaternary structure, part of the 50S ribosomal subunit.

The sequence is that of Large ribosomal subunit protein uL30 from Escherichia coli (strain UTI89 / UPEC).